The following is a 1183-amino-acid chain: Chromosome partition protein Smc (1183 aa).

32–39 contributes to the ATP binding site; the sequence is PNGCGKTN. Coiled-coil stretches lie at residues 167–322 and 358–497; these read ITRY…ERLN and AEFE…ALCN. Residues 409–442 form a disordered region; sequence KEHLEGSVNRLDQRKRDLERSMEQAEPERRRTSE. Residues 419–442 show a composition bias toward basic and acidic residues; that stretch reads LDQRKRDLERSMEQAEPERRRTSE. The SMC hinge domain occupies 523–632; it reads LGCLSDLISV…VADLDAAEQL (110 aa). Coiled coils occupy residues 669–941 and 980–1025; these read GKKA…VMER and NELA…ALEK.

The protein belongs to the SMC family. As to quaternary structure, homodimer.

It is found in the cytoplasm. Functionally, required for chromosome condensation and partitioning. The protein is Chromosome partition protein Smc of Chlorobaculum tepidum (strain ATCC 49652 / DSM 12025 / NBRC 103806 / TLS) (Chlorobium tepidum).